We begin with the raw amino-acid sequence, 400 residues long: Carnosine N-methyltransferase (400 aa).

The disordered stretch occupies residues 1 to 49 (MQRRRRAPPASQPAQDSGHSEEVEVQFSAGRLGSAAPAGPPVRGTAEDE). S-adenosyl-L-methionine contacts are provided by Gln155, Arg158, Gly199, Glu220, Asp286, Phe287, and Cys303. Asp307 provides a ligand contact to carnosine. Tyr315 contributes to the S-adenosyl-L-methionine binding site. Carnosine-binding residues include His338 and Tyr389.

Belongs to the carnosine N-methyltransferase family. In terms of assembly, homodimer. Each monomer accommodates one molecule of carnosine in its active pocket, precisely anchoring the histidine imidazole ring such that only N1 is exposed and deprotonated for methylation. As to expression, expressed at higher level in skeletal muscle compared to other tissues.

The protein localises to the cytoplasm. It is found in the cytosol. The protein resides in the nucleus. It carries out the reaction carnosine + S-adenosyl-L-methionine = anserine + S-adenosyl-L-homocysteine + H(+). Its function is as follows. N-methyltransferase that catalyzes the formation of anserine (beta-alanyl-N(Pi)-methyl-L-histidine) from carnosine. Anserine, a methylated derivative of carnosine (beta-alanyl-L-histidine), is an abundant constituent of vertebrate skeletal muscles. Also methylates other L-histidine-containing di- and tripeptides such as Gly-Gly-His, Gly-His and homocarnosine (GABA-His). The protein is Carnosine N-methyltransferase of Rattus norvegicus (Rat).